Consider the following 132-residue polypeptide: MKPQPFTLELSNCQLRHDGGAADKDEVRMVNVRWIDGFMVNSVSNENAGYLANTRADGASHIFLALSTNDNNTLNKSNKIVPADPQQNRVPLVEKAVDGGIFTYYIGYVTPAPEKATSGPLTSWATWELVYN.

The protein localises to the fimbrium. Its function is as follows. Appears to affect the stability of the intact fimbriae on the cell surface. The protein is Protein MrkF (mrkF) of Klebsiella pneumoniae.